A 346-amino-acid polypeptide reads, in one-letter code: Cyclin-dependent kinase 20 (346 aa).

Residues 4–288 form the Protein kinase domain; it reads YCILGRIGEG…ASKALLHQYF (285 aa). Residues 10-18 and lysine 33 contribute to the ATP site; that span reads IGEGAHGIV. Aspartate 127 functions as the Proton acceptor in the catalytic mechanism.

The protein belongs to the protein kinase superfamily. CMGC Ser/Thr protein kinase family. CDC2/CDKX subfamily. In terms of assembly, monomer. Interacts with TBC1D32. Interacts with MAK.

Its subcellular location is the nucleus. It is found in the cytoplasm. It localises to the cell projection. The protein resides in the cilium. It carries out the reaction L-seryl-[protein] + ATP = O-phospho-L-seryl-[protein] + ADP + H(+). The catalysed reaction is L-threonyl-[protein] + ATP = O-phospho-L-threonyl-[protein] + ADP + H(+). Required for high-level Shh responses in the developing neural tube. Together with TBC1D32, controls the structure of the primary cilium by coordinating assembly of the ciliary membrane and axoneme, allowing GLI2 to be properly activated in response to SHH signaling. Involved in cell growth. Activates CDK2, a kinase involved in the control of the cell cycle, by phosphorylating residue 'Thr-160'. This is Cyclin-dependent kinase 20 (CDK20) from Homo sapiens (Human).